Here is a 342-residue protein sequence, read N- to C-terminus: tRNA-specific 2-thiouridylase MnmA (342 aa).

ATP-binding positions include 6 to 13 (LLSGGVDS) and Leu32. The active-site Nucleophile is Cys92. Cysteines 92 and 191 form a disulfide. Gly116 serves as a coordination point for ATP. The segment at 138–140 (KDQ) is interaction with tRNA. Residue Cys191 is the Cysteine persulfide intermediate of the active site. The segment at 293–294 (RY) is interaction with tRNA.

It belongs to the MnmA/TRMU family.

The protein resides in the cytoplasm. The enzyme catalyses S-sulfanyl-L-cysteinyl-[protein] + uridine(34) in tRNA + AH2 + ATP = 2-thiouridine(34) in tRNA + L-cysteinyl-[protein] + A + AMP + diphosphate + H(+). Functionally, catalyzes the 2-thiolation of uridine at the wobble position (U34) of tRNA, leading to the formation of s(2)U34. The sequence is that of tRNA-specific 2-thiouridylase MnmA from Helicobacter pylori (strain ATCC 700392 / 26695) (Campylobacter pylori).